A 430-amino-acid polypeptide reads, in one-letter code: Gustatory receptor-like 43a (430 aa).

Topologically, residues 1–31 (MSTGSHSPEAMWSATNFRRHQRKPNQVLHRW) are cytoplasmic. Residues 32 to 52 (FFKGSAWIIYAIACGLHFFKL) traverse the membrane as a helical segment. Topologically, residues 53-79 (HYNERTNQVEESQYHRIWSKIVVVLKV) are extracellular. A helical membrane pass occupies residues 80 to 100 (ILLASPYLQYFVLGLGIYIHI). At 101-110 (TLVQDSKAQN) the chain is on the cytoplasmic side. Residues 111–131 (FLMSLIVLGIVIGVLRRLLIF) form a helical membrane-spanning segment. Topologically, residues 132 to 168 (LHLKRDRRFLKHTVNEILHITSALEQKFGMEYKCDST) are extracellular. A helical membrane pass occupies residues 169–189 (LLVVYLAKLWILTVMLDSLWY). Topologically, residues 190 to 277 (KPYFLSSIFL…RDNVSWLSTS (88 aa)) are cytoplasmic. Residues 278-298 (VYLMIFTCIFNAELLIECSLF) form a helical membrane-spanning segment. Residues 299 to 306 (AGDELENK) lie on the Extracellular side of the membrane. A helical transmembrane segment spans residues 307–327 (IYIITDGCLGPVCVPILYVLI). At 328–396 (LGMCTDRFRD…IILDITCDRE (69 aa)) the chain is on the cytoplasmic side. The chain crosses the membrane as a helical span at residues 397-417 (FVMDYIVTVILTALSLVQYTI). The Extracellular segment spans residues 418–430 (STGGNISECVTHK). N-linked (GlcNAc...) asparagine glycosylation is present at Asn422.

It is found in the cell membrane. This chain is Gustatory receptor-like 43a, found in Drosophila melanogaster (Fruit fly).